Consider the following 417-residue polypeptide: C6 finger transcription factor traC (417 aa).

A disordered region spans residues 1–40 (MNFSEQFTGRSEPGRKANRTSNNNTNSTTNVATVTTDDSN). Low complexity predominate over residues 19–37 (RTSNNNTNSTTNVATVTTD). The zn(2)-C6 fungal-type DNA-binding region spans 44–73 (CDRCKGQKLRCIWENGSNTCRRCTRARAVC). Disordered regions lie at residues 75-94 (QPRP…KHHV) and 104-128 (WVSS…DDHD). Residues 80 to 94 (PFGRPRCSTKSKHHV) are compositionally biased toward basic residues. The segment covering 104–114 (WVSSTTQQPQE) has biased composition (polar residues).

The protein resides in the nucleus. Functionally, C6 finger transcription factor; part of the tra gene cluster that produces terrestric acid. The clavatol biosynthesis cluster cla and the terrestric acid cluster tra are both involved in the production of peniphenones and penilactones. This Penicillium crustosum (Blue mold fungus) protein is C6 finger transcription factor traC.